Reading from the N-terminus, the 373-residue chain is Chaperone protein DnaJ (373 aa).

A J domain is found at 4 to 69 (NYYEILEISQ…EKRSIYDRYG (66 aa)). Residues 133-210 (GCKKKIDFSY…CHGNGYEEIK (78 aa)) form a CR-type zinc finger. Zn(2+) contacts are provided by cysteine 146, cysteine 149, cysteine 162, cysteine 165, cysteine 184, cysteine 187, cysteine 198, and cysteine 201. 4 CXXCXGXG motif repeats span residues 146–153 (CKSCKGSG), 162–169 (CPHCGGKG), 184–191 (CDHCKGSG), and 198–205 (CKTCHGNG).

This sequence belongs to the DnaJ family. Homodimer. Zn(2+) serves as cofactor.

It is found in the cytoplasm. Participates actively in the response to hyperosmotic and heat shock by preventing the aggregation of stress-denatured proteins and by disaggregating proteins, also in an autonomous, DnaK-independent fashion. Unfolded proteins bind initially to DnaJ; upon interaction with the DnaJ-bound protein, DnaK hydrolyzes its bound ATP, resulting in the formation of a stable complex. GrpE releases ADP from DnaK; ATP binding to DnaK triggers the release of the substrate protein, thus completing the reaction cycle. Several rounds of ATP-dependent interactions between DnaJ, DnaK and GrpE are required for fully efficient folding. Also involved, together with DnaK and GrpE, in the DNA replication of plasmids through activation of initiation proteins. The chain is Chaperone protein DnaJ from Campylobacter lari (strain RM2100 / D67 / ATCC BAA-1060).